The sequence spans 343 residues: N-acetyl-gamma-glutamyl-phosphate reductase (343 aa).

Cys147 is a catalytic residue.

The protein belongs to the NAGSA dehydrogenase family. Type 1 subfamily.

The protein resides in the cytoplasm. The catalysed reaction is N-acetyl-L-glutamate 5-semialdehyde + phosphate + NADP(+) = N-acetyl-L-glutamyl 5-phosphate + NADPH + H(+). The protein operates within amino-acid biosynthesis; L-arginine biosynthesis; N(2)-acetyl-L-ornithine from L-glutamate: step 3/4. Its function is as follows. Catalyzes the NADPH-dependent reduction of N-acetyl-5-glutamyl phosphate to yield N-acetyl-L-glutamate 5-semialdehyde. This Listeria monocytogenes serotype 4a (strain HCC23) protein is N-acetyl-gamma-glutamyl-phosphate reductase.